We begin with the raw amino-acid sequence, 406 residues long: COP9 signalosome complex subunit 4 (406 aa).

The region spanning 197 to 366 is the PCI domain; that stretch reads YRRKFIEAAQ…GIVHFETREP (170 aa).

This sequence belongs to the CSN4 family. In terms of assembly, component of the CSN complex, probably composed of cops1, cops2, cops3, cops4, cops5, cops6, cops7, cops8 and cops9.

Its subcellular location is the cytoplasm. It localises to the nucleus. The protein resides in the cytoplasmic vesicle. It is found in the secretory vesicle. The protein localises to the synaptic vesicle. Its function is as follows. Component of the COP9 signalosome complex (CSN), a complex involved in various cellular and developmental processes. The CSN complex is an essential regulator of the ubiquitin (Ubl) conjugation pathway by mediating the deneddylation of the cullin subunits of E3 ligase complexes, leading to modify the Ubl ligase activity. This Danio rerio (Zebrafish) protein is COP9 signalosome complex subunit 4 (cops4).